A 439-amino-acid polypeptide reads, in one-letter code: Guanine deaminase (439 aa).

Zn(2+) is bound by residues His-82 and His-84. Substrate-binding positions include 84 to 87 (HYPQ), 209 to 210 (RF), 237 to 240 (HLCE), and Asp-327. Zn(2+) is bound by residues His-237 and Asp-327.

Belongs to the metallo-dependent hydrolases superfamily. ATZ/TRZ family. Zn(2+) serves as cofactor.

The enzyme catalyses guanine + H2O + H(+) = xanthine + NH4(+). The protein operates within purine metabolism; guanine degradation; xanthine from guanine: step 1/1. Catalyzes the hydrolytic deamination of guanine, producing xanthine and ammonia. This chain is Guanine deaminase (guaD), found in Escherichia coli (strain K12).